A 309-amino-acid polypeptide reads, in one-letter code: Ornithine carbamoyltransferase (309 aa).

Carbamoyl phosphate contacts are provided by residues 51 to 54, Gln78, Arg102, and 129 to 132; these read STRT and HPVQ. L-ornithine-binding positions include Asn159, Asp223, and 227–228; that span reads SM. Carbamoyl phosphate contacts are provided by residues 263-264 and Arg291; that span reads CL.

This sequence belongs to the aspartate/ornithine carbamoyltransferase superfamily. OTCase family.

The protein resides in the cytoplasm. The catalysed reaction is carbamoyl phosphate + L-ornithine = L-citrulline + phosphate + H(+). It functions in the pathway amino-acid biosynthesis; L-arginine biosynthesis; L-arginine from L-ornithine and carbamoyl phosphate: step 1/3. In terms of biological role, reversibly catalyzes the transfer of the carbamoyl group from carbamoyl phosphate (CP) to the N(epsilon) atom of ornithine (ORN) to produce L-citrulline. The sequence is that of Ornithine carbamoyltransferase from Nitratiruptor sp. (strain SB155-2).